The chain runs to 394 residues: Carbamoyl phosphate synthase small chain (394 aa).

Positions 1-188 (MIRKERAILA…PLPYAFPTLR (188 aa)) are CPSase. Positions 49, 240, and 242 each coordinate L-glutamine. The 188-residue stretch at 192-379 (RVVLMDFGIK…IEEIDAFEGA (188 aa)) folds into the Glutamine amidotransferase type-1 domain. C267 functions as the Nucleophile in the catalytic mechanism. L268, Q271, N309, G311, and Y312 together coordinate L-glutamine. Catalysis depends on residues H352 and E354.

This sequence belongs to the CarA family. In terms of assembly, composed of two chains; the small (or glutamine) chain promotes the hydrolysis of glutamine to ammonia, which is used by the large (or ammonia) chain to synthesize carbamoyl phosphate. Tetramer of heterodimers (alpha,beta)4.

It carries out the reaction hydrogencarbonate + L-glutamine + 2 ATP + H2O = carbamoyl phosphate + L-glutamate + 2 ADP + phosphate + 2 H(+). The catalysed reaction is L-glutamine + H2O = L-glutamate + NH4(+). Its pathway is amino-acid biosynthesis; L-arginine biosynthesis; carbamoyl phosphate from bicarbonate: step 1/1. It participates in pyrimidine metabolism; UMP biosynthesis via de novo pathway; (S)-dihydroorotate from bicarbonate: step 1/3. Functionally, small subunit of the glutamine-dependent carbamoyl phosphate synthetase (CPSase). CPSase catalyzes the formation of carbamoyl phosphate from the ammonia moiety of glutamine, carbonate, and phosphate donated by ATP, constituting the first step of 2 biosynthetic pathways, one leading to arginine and/or urea and the other to pyrimidine nucleotides. The small subunit (glutamine amidotransferase) binds and cleaves glutamine to supply the large subunit with the substrate ammonia. This is Carbamoyl phosphate synthase small chain from Deinococcus geothermalis (strain DSM 11300 / CIP 105573 / AG-3a).